The primary structure comprises 269 residues: GTP cyclohydrolase FolE2 2 (269 aa).

Belongs to the GTP cyclohydrolase IV family.

The enzyme catalyses GTP + H2O = 7,8-dihydroneopterin 3'-triphosphate + formate + H(+). It participates in cofactor biosynthesis; 7,8-dihydroneopterin triphosphate biosynthesis; 7,8-dihydroneopterin triphosphate from GTP: step 1/1. Its function is as follows. Converts GTP to 7,8-dihydroneopterin triphosphate. This is GTP cyclohydrolase FolE2 2 from Burkholderia lata (strain ATCC 17760 / DSM 23089 / LMG 22485 / NCIMB 9086 / R18194 / 383).